The primary structure comprises 1070 residues: Error-prone DNA polymerase (1070 aa).

The protein belongs to the DNA polymerase type-C family. DnaE2 subfamily.

The protein localises to the cytoplasm. The enzyme catalyses DNA(n) + a 2'-deoxyribonucleoside 5'-triphosphate = DNA(n+1) + diphosphate. DNA polymerase involved in damage-induced mutagenesis and translesion synthesis (TLS). It is not the major replicative DNA polymerase. The chain is Error-prone DNA polymerase from Aromatoleum aromaticum (strain DSM 19018 / LMG 30748 / EbN1) (Azoarcus sp. (strain EbN1)).